Reading from the N-terminus, the 476-residue chain is 3-ketoacyl-CoA synthase 12 (476 aa).

The signal sequence occupies residues 1 to 25; the sequence is MDLLFLFFSLLLSYLFFKIWKLIDS. The region spanning 26–313 is the FAE domain; sequence KQDKDCYILD…FMLKLLIKKI (288 aa). Catalysis depends on residues Cys168, His247, His344, His348, His377, and Asn381.

Belongs to the thiolase-like superfamily. Chalcone/stilbene synthases family. Expressed in siliques, flowers and leaves.

Its subcellular location is the endoplasmic reticulum. The catalysed reaction is a very-long-chain acyl-CoA + malonyl-CoA + H(+) = a very-long-chain 3-oxoacyl-CoA + CO2 + CoA. It participates in lipid metabolism; fatty acid biosynthesis. The sequence is that of 3-ketoacyl-CoA synthase 12 from Arabidopsis thaliana (Mouse-ear cress).